The primary structure comprises 308 residues: 4-hydroxy-tetrahydrodipicolinate synthase (308 aa).

Residue threonine 53 coordinates pyruvate. Tyrosine 141 (proton donor/acceptor) is an active-site residue. Lysine 169 (schiff-base intermediate with substrate) is an active-site residue. Valine 209 provides a ligand contact to pyruvate.

It belongs to the DapA family. Homotetramer; dimer of dimers.

It is found in the cytoplasm. It carries out the reaction L-aspartate 4-semialdehyde + pyruvate = (2S,4S)-4-hydroxy-2,3,4,5-tetrahydrodipicolinate + H2O + H(+). It functions in the pathway amino-acid biosynthesis; L-lysine biosynthesis via DAP pathway; (S)-tetrahydrodipicolinate from L-aspartate: step 3/4. Functionally, catalyzes the condensation of (S)-aspartate-beta-semialdehyde [(S)-ASA] and pyruvate to 4-hydroxy-tetrahydrodipicolinate (HTPA). The protein is 4-hydroxy-tetrahydrodipicolinate synthase of Acidothermus cellulolyticus (strain ATCC 43068 / DSM 8971 / 11B).